Reading from the N-terminus, the 146-residue chain is Hemoglobin subunit beta-1 (146 aa).

The Globin domain occupies 2-146 (VWTNEERSII…VVSALGKQYH (145 aa)). Residues H63 and H92 each coordinate heme b.

The protein belongs to the globin family. As to quaternary structure, hb1 is a heterotetramer of two alpha chains and two beta-1 chains. Red blood cells.

In terms of biological role, involved in oxygen transport from gills to the various peripheral tissues. This is Hemoglobin subunit beta-1 (hbb1) from Pseudaphritis urvillii (Congolli).